Here is a 366-residue protein sequence, read N- to C-terminus: Carbamoyl phosphate synthase small chain (366 aa).

Residues 1–168 (MYGILVLEDG…KETVIYNAED (168 aa)) form a CPSase region. Residues S45, G220, and G222 each contribute to the L-glutamine site. Residues 172 to 363 (RCVLIDCGVK…VELGIKFKAE (192 aa)) enclose the Glutamine amidotransferase type-1 domain. C247 acts as the Nucleophile in catalysis. L-glutamine is bound by residues L248, Q251, N289, G291, and F292. Residues H336 and E338 contribute to the active site.

Belongs to the CarA family. Composed of two chains; the small (or glutamine) chain promotes the hydrolysis of glutamine to ammonia, which is used by the large (or ammonia) chain to synthesize carbamoyl phosphate. Tetramer of heterodimers (alpha,beta)4.

The catalysed reaction is hydrogencarbonate + L-glutamine + 2 ATP + H2O = carbamoyl phosphate + L-glutamate + 2 ADP + phosphate + 2 H(+). The enzyme catalyses L-glutamine + H2O = L-glutamate + NH4(+). Its pathway is amino-acid biosynthesis; L-arginine biosynthesis; carbamoyl phosphate from bicarbonate: step 1/1. It participates in pyrimidine metabolism; UMP biosynthesis via de novo pathway; (S)-dihydroorotate from bicarbonate: step 1/3. Its function is as follows. Small subunit of the glutamine-dependent carbamoyl phosphate synthetase (CPSase). CPSase catalyzes the formation of carbamoyl phosphate from the ammonia moiety of glutamine, carbonate, and phosphate donated by ATP, constituting the first step of 2 biosynthetic pathways, one leading to arginine and/or urea and the other to pyrimidine nucleotides. The small subunit (glutamine amidotransferase) binds and cleaves glutamine to supply the large subunit with the substrate ammonia. This Methanococcus maripaludis (strain C5 / ATCC BAA-1333) protein is Carbamoyl phosphate synthase small chain.